The primary structure comprises 753 residues: 5-methyltetrahydropteroyltriglutamate--homocysteine methyltransferase (753 aa).

5-methyltetrahydropteroyltri-L-glutamate-binding positions include 17 to 20 and lysine 117; that span reads RELK. L-homocysteine contacts are provided by residues 431–433 and glutamate 484; that span reads IGS. L-methionine is bound by residues 431 to 433 and glutamate 484; that span reads IGS. 5-methyltetrahydropteroyltri-L-glutamate is bound by residues 515–516 and tryptophan 561; that span reads RC. Position 599 (aspartate 599) interacts with L-homocysteine. Aspartate 599 contacts L-methionine. Residue glutamate 605 participates in 5-methyltetrahydropteroyltri-L-glutamate binding. Residues histidine 641, cysteine 643, and glutamate 665 each coordinate Zn(2+). Histidine 694 (proton donor) is an active-site residue. Cysteine 726 lines the Zn(2+) pocket.

This sequence belongs to the vitamin-B12 independent methionine synthase family. The cofactor is Zn(2+).

It carries out the reaction 5-methyltetrahydropteroyltri-L-glutamate + L-homocysteine = tetrahydropteroyltri-L-glutamate + L-methionine. Its pathway is amino-acid biosynthesis; L-methionine biosynthesis via de novo pathway; L-methionine from L-homocysteine (MetE route): step 1/1. Its function is as follows. Catalyzes the transfer of a methyl group from 5-methyltetrahydrofolate to homocysteine resulting in methionine formation. In Escherichia coli O8 (strain IAI1), this protein is 5-methyltetrahydropteroyltriglutamate--homocysteine methyltransferase.